An 85-amino-acid polypeptide reads, in one-letter code: Probable oxaloacetate decarboxylase gamma chain (85 aa).

Residues 15-35 (ISGMGFVLLFLIVLIYAISFI) form a helical membrane-spanning segment.

Belongs to the OadG family. In terms of assembly, heterotrimer of an alpha, a beta and a gamma subunit. Requires Na(+) as cofactor.

Its subcellular location is the cell membrane. It catalyses the reaction oxaloacetate + 2 Na(+)(in) + H(+) = pyruvate + 2 Na(+)(out) + CO2. Catalyzes the decarboxylation of oxaloacetate coupled to Na(+) translocation. This is Probable oxaloacetate decarboxylase gamma chain from Actinobacillus pleuropneumoniae serotype 5b (strain L20).